A 529-amino-acid chain; its full sequence is Peptide chain release factor 3 (529 aa).

In terms of domain architecture, tr-type G spans 11-280; sequence ARRRTFAIIS…GLVEWAPSPM (270 aa). GTP-binding positions include 20-27, 88-92, and 142-145; these read SHPDAGKT, DTPGH, and NKLD.

Belongs to the TRAFAC class translation factor GTPase superfamily. Classic translation factor GTPase family. PrfC subfamily.

The protein localises to the cytoplasm. Increases the formation of ribosomal termination complexes and stimulates activities of RF-1 and RF-2. It binds guanine nucleotides and has strong preference for UGA stop codons. It may interact directly with the ribosome. The stimulation of RF-1 and RF-2 is significantly reduced by GTP and GDP, but not by GMP. The polypeptide is Peptide chain release factor 3 (Erwinia tasmaniensis (strain DSM 17950 / CFBP 7177 / CIP 109463 / NCPPB 4357 / Et1/99)).